A 277-amino-acid polypeptide reads, in one-letter code: 3-methyl-2-oxobutanoate hydroxymethyltransferase (277 aa).

Positions 43 and 82 each coordinate Mg(2+). 3-methyl-2-oxobutanoate-binding positions include 43–44 (DS), Asp82, and Lys112. Mg(2+) is bound at residue Glu114. Glu181 acts as the Proton acceptor in catalysis.

Belongs to the PanB family. As to quaternary structure, homodecamer; pentamer of dimers. Mg(2+) is required as a cofactor.

The protein resides in the cytoplasm. It catalyses the reaction 3-methyl-2-oxobutanoate + (6R)-5,10-methylene-5,6,7,8-tetrahydrofolate + H2O = 2-dehydropantoate + (6S)-5,6,7,8-tetrahydrofolate. The protein operates within cofactor biosynthesis; (R)-pantothenate biosynthesis; (R)-pantoate from 3-methyl-2-oxobutanoate: step 1/2. In terms of biological role, catalyzes the reversible reaction in which hydroxymethyl group from 5,10-methylenetetrahydrofolate is transferred onto alpha-ketoisovalerate to form ketopantoate. In Bacillus velezensis (strain DSM 23117 / BGSC 10A6 / LMG 26770 / FZB42) (Bacillus amyloliquefaciens subsp. plantarum), this protein is 3-methyl-2-oxobutanoate hydroxymethyltransferase.